The primary structure comprises 350 residues: MVPAACMLLWALLLSLEYRAAGAEDQTTTPTATTIGMQRVSFRFGGPARSLHSTNPTARTTVPGKLRVTLEDENDALATADRLALPAAAELLSTVTGYSRSSVPSPSDWEEDGSLEEGVVDTRKTTNGPVSLFSTTNTVGSSGTTGRFLANSQEREIKLTTDVRSLSSKTTVVDLSSESTLQQWSTPGSTPSPWLKPSFTAMPSPEDLRVVLMPWGPWHCHCKSGTMSRSRAGKLHGLSGRLRVGALNELRTEHRPCTYQLCACNRHLEECPLDSSLCSDHSCSSRAPFQSSTTSLVPVHLRRRPILPPTSPSPSPALAFWKRVRIGLEDIWNSLSSVFTETQPVERIQR.

The signal sequence occupies residues 1-23 (MVPAACMLLWALLLSLEYRAAGA).

In terms of processing, phosphorylation sites are present in the extracellular medium. As to expression, high expression in testis, but low in other tissues.

The protein localises to the secreted. Its function is as follows. Involved in control of cellular proliferation. Onconcogenic modifier contributing to the tumor suppressor function of DNMT3B. The protein is Protein MENT (Ment) of Mus musculus (Mouse).